We begin with the raw amino-acid sequence, 236 residues long: Dolichol-phosphate mannosyltransferase (236 aa).

Pro9, Tyr11, Glu13, Ile40, Asp42, Asp95, Ala96, Asp97, Arg124, Val160, Arg211, and Lys217 together coordinate GDP-alpha-D-mannose. Asp97 is a Mg(2+) binding site. Asp97 lines the Mn(2+) pocket.

This sequence belongs to the glycosyltransferase 2 family. In terms of assembly, component of the dolichol-phosphate mannose (DPM) synthase complex composed of dpm1, dpm2 and dpm3. The cofactor is Mg(2+). It depends on Mn(2+) as a cofactor. Ca(2+) serves as cofactor.

It localises to the endoplasmic reticulum. It carries out the reaction a di-trans,poly-cis-dolichyl phosphate + GDP-alpha-D-mannose = a di-trans,poly-cis-dolichyl beta-D-mannosyl phosphate + GDP. Its pathway is protein modification; protein glycosylation. Transfers mannose from GDP-mannose to dolichol monophosphate to form dolichol phosphate mannose (Dol-P-Man) which is the mannosyl donor in pathways leading to N-glycosylation, glycosyl phosphatidylinositol membrane anchoring, and O-mannosylation of proteins. The sequence is that of Dolichol-phosphate mannosyltransferase from Schizosaccharomyces pombe (strain 972 / ATCC 24843) (Fission yeast).